The primary structure comprises 210 residues: MARALVLLSVVLVSLLVNQGRASDNQRLFNNAVIRVQHLHQLAAKMINDFEDSLLPEERRQLSKIFPLSFCNSDYIEAPTGKDETQKSSMLKLLRVSFRLIESWEFPSQTLSGTVSNSLTVGNPNQITEKLADLKMGISVLIQACLDGQPNMDDNDSLPLPFEEFYLTMGDNSLRESFRLLACFKKDMHKVETYLRVANCRRSLDSNCTL.

A signal peptide spans 1-22; that stretch reads MARALVLLSVVLVSLLVNQGRA. Histidine 38 contributes to the Zn(2+) binding site. An intrachain disulfide couples cysteine 71 to cysteine 183. Glutamate 192 contacts Zn(2+). The cysteines at positions 200 and 208 are disulfide-linked.

The protein belongs to the somatotropin/prolactin family.

The protein localises to the secreted. Growth hormone plays an important role in growth control and is involved in the regulation of several anabolic processes. Implicated as an osmoregulatory substance important for seawater adaptation. The chain is Somatotropin-1 (gh1) from Carassius auratus (Goldfish).